Reading from the N-terminus, the 110-residue chain is NADH-quinone oxidoreductase subunit K (110 aa).

Transmembrane regions (helical) follow at residues 13 to 33 (VTHG…GIII), 38 to 58 (ILIL…NFLI), and 70 to 90 (VFVF…LAIV).

The protein belongs to the complex I subunit 4L family. In terms of assembly, NDH-1 is composed of 14 different subunits. Subunits NuoA, H, J, K, L, M, N constitute the membrane sector of the complex.

It is found in the cell inner membrane. The catalysed reaction is a quinone + NADH + 5 H(+)(in) = a quinol + NAD(+) + 4 H(+)(out). Its function is as follows. NDH-1 shuttles electrons from NADH, via FMN and iron-sulfur (Fe-S) centers, to quinones in the respiratory chain. The immediate electron acceptor for the enzyme in this species is believed to be ubiquinone. Couples the redox reaction to proton translocation (for every two electrons transferred, four hydrogen ions are translocated across the cytoplasmic membrane), and thus conserves the redox energy in a proton gradient. The protein is NADH-quinone oxidoreductase subunit K of Francisella tularensis subsp. tularensis (strain FSC 198).